The following is a 172-amino-acid chain: Lipopolysaccharide export system protein LptA (172 aa).

The N-terminal stretch at 1-23 is a signal peptide; sequence MKLVSNKILFLATMVLASSSAFA.

Belongs to the LptA family. In terms of assembly, component of the lipopolysaccharide transport and assembly complex.

It localises to the periplasm. Functionally, involved in the assembly of lipopolysaccharide (LPS). Required for the translocation of LPS from the inner membrane to the outer membrane. May form a bridge between the inner membrane and the outer membrane, via interactions with LptC and LptD, thereby facilitating LPS transfer across the periplasm. The polypeptide is Lipopolysaccharide export system protein LptA (Haemophilus influenzae (strain ATCC 51907 / DSM 11121 / KW20 / Rd)).